The following is a 410-amino-acid chain: Phosphopentomutase (410 aa).

Mn(2+)-binding residues include Asp10, Asp309, His314, Asp350, His351, and His362.

It belongs to the phosphopentomutase family. Mn(2+) is required as a cofactor.

It localises to the cytoplasm. The enzyme catalyses 2-deoxy-alpha-D-ribose 1-phosphate = 2-deoxy-D-ribose 5-phosphate. The catalysed reaction is alpha-D-ribose 1-phosphate = D-ribose 5-phosphate. It functions in the pathway carbohydrate degradation; 2-deoxy-D-ribose 1-phosphate degradation; D-glyceraldehyde 3-phosphate and acetaldehyde from 2-deoxy-alpha-D-ribose 1-phosphate: step 1/2. Isomerase that catalyzes the conversion of deoxy-ribose 1-phosphate (dRib-1-P) and ribose 1-phosphate (Rib-1-P) to deoxy-ribose 5-phosphate (dRib-5-P) and ribose 5-phosphate (Rib-5-P), respectively. The sequence is that of Phosphopentomutase from Aliivibrio fischeri (strain ATCC 700601 / ES114) (Vibrio fischeri).